The primary structure comprises 325 residues: Lipoyl synthase (325 aa).

[4Fe-4S] cluster is bound by residues Cys68, Cys73, Cys79, Cys94, Cys98, Cys101, and Ser308. The region spanning 80–297 (FGGGTATFMI…ARVANELGFT (218 aa)) is the Radical SAM core domain.

This sequence belongs to the radical SAM superfamily. Lipoyl synthase family. Requires [4Fe-4S] cluster as cofactor.

The protein resides in the cytoplasm. The catalysed reaction is [[Fe-S] cluster scaffold protein carrying a second [4Fe-4S](2+) cluster] + N(6)-octanoyl-L-lysyl-[protein] + 2 oxidized [2Fe-2S]-[ferredoxin] + 2 S-adenosyl-L-methionine + 4 H(+) = [[Fe-S] cluster scaffold protein] + N(6)-[(R)-dihydrolipoyl]-L-lysyl-[protein] + 4 Fe(3+) + 2 hydrogen sulfide + 2 5'-deoxyadenosine + 2 L-methionine + 2 reduced [2Fe-2S]-[ferredoxin]. It participates in protein modification; protein lipoylation via endogenous pathway; protein N(6)-(lipoyl)lysine from octanoyl-[acyl-carrier-protein]: step 2/2. Functionally, catalyzes the radical-mediated insertion of two sulfur atoms into the C-6 and C-8 positions of the octanoyl moiety bound to the lipoyl domains of lipoate-dependent enzymes, thereby converting the octanoylated domains into lipoylated derivatives. This Alcanivorax borkumensis (strain ATCC 700651 / DSM 11573 / NCIMB 13689 / SK2) protein is Lipoyl synthase.